The following is a 348-amino-acid chain: MSTFPAEPRSDIVNGHVESDFNYQTGTWSEPVFVQDHYLKVHGLAPGLNYGQQVFEGMKAYRDPNGQIQIFRPTDHALRMQRSCDAVSIPSIPESLFWASVNLAVAKNSEFVPPHASEAAMYIRPLAFGSGGWMPVAAGPQYKFVVYALPFCAYHGTLPVDAVVLEELDRAAPLGVGNVKVGGNYAPVLKWSDKARKEGFGITLHLDSKTRGEIDEFSTSGFVGIKYTESGGEKGYTLVVPNSQCIIKSVTSTSVVEVARSLGWRVEVRPIPYDELEFFDEVLAVGTAAMITSIRSITHRSKDQVFRYKTSDEPGSACEKLSRHLKGIQKGDEKDTFGWLKRVEEVTV.

Residue R79 coordinates pyridoxal 5'-phosphate. At K180 the chain carries N6-(pyridoxal phosphate)lysine. E216 serves as a coordination point for pyridoxal 5'-phosphate.

Belongs to the class-IV pyridoxal-phosphate-dependent aminotransferase family. Pyridoxal 5'-phosphate serves as cofactor.

The protein operates within secondary metabolite biosynthesis. Aminotransferase; part of the gene cluster that mediates the biosynthesis of aspercryptins, linear lipopeptides built from six amino acids including 2 highly unusual and nonproteogenic amino acids, 2-amino-octanoic acid (2aoa) and 2-amino-dodecanol (2adol). The core structure of aspercryptins is as follows: Ser/Ala-Thr-Ile/Val-2aoa-Asn-2adol. The first step of aspercryptin biosynthesis is the generation of the fatty acid precursors, octanoic and dodecanoic acids, by the FAS subunits atnF and atnM. The fatty acid precursors are likely transformed into the corresponding alpha-amino fatty acids in three steps. First, they are hydroxylated by the cytochrome P450 monooxygenase atnE, then oxidized to the corresponding alpha-keto acids by the NAD(P)-dependent oxidoreductase atnD, and finally converted to the alpha-amino fatty acids by the PLP-dependent aminotransferases atnH or atnJ. the alpha-amino fatty acids, 2-amino-octanoic and 2-amino-dodecanoic acids, are recognized, activated, and covalently tethered to the NRPS atnA by its fourth and sixth adenylation domains. The second module of atnA is the Thr module and contains an epimerase (E) domain responsible for the epimerization of Thr to D-allo-Thr. Additionally, despite atnA having only one epimerase domain, the first amino acid of aspercryptin A1 is D-Ser, suggesting that serine is either loaded directly as D-Ser on the first module or that the epimerase domain in the threonine module epimerizes both L-Ser and L-Thr. After condensation of the hexapeptide of aspercryptin, the C-terminal reductase (TE) domain might be involved in the reductive release and production of the aldehyde hexapeptide. Further reduction would generate aspercryptins. The variety of aspercryptins produced reflects the flexibility of the atnA NRPS, allowing incorporation of alanine instead of serine, valine for isoleucine, and a C10 fatty amino alcohol instead of the C12 version. AtnB seems to be involved in the selectivity for Ile versus Val by the third module. Moreover, type B, C and D aspercryptins have an additional N-terminal cichorine, acetyl and propionyl group respectively. This Emericella nidulans (strain FGSC A4 / ATCC 38163 / CBS 112.46 / NRRL 194 / M139) (Aspergillus nidulans) protein is Aminotransferase atnJ.